Reading from the N-terminus, the 1483-residue chain is Chromosome partition protein MukB (1483 aa).

34–41 (GGNGAGKS) lines the ATP pocket. 2 coiled-coil regions span residues 311–426 (EMAR…LQRA) and 547–607 (GQQV…WLAA). The tract at residues 666–783 (PGGSEDARLN…KVPLFGRAAR (118 aa)) is flexible hinge. Coiled-coil stretches lie at residues 835–1115 (EAAL…SAKA) and 1206–1266 (DDPV…QAVS). The segment at 850–870 (RELNNHESENQQQRQQYEQAK) is disordered.

The protein belongs to the SMC family. MukB subfamily. In terms of assembly, homodimerization via its hinge domain. Binds to DNA via its C-terminal region. Interacts, and probably forms a ternary complex, with MukE and MukF via its C-terminal region. The complex formation is stimulated by calcium or magnesium. Interacts with tubulin-related protein FtsZ.

The protein localises to the cytoplasm. It is found in the nucleoid. Plays a central role in chromosome condensation, segregation and cell cycle progression. Functions as a homodimer, which is essential for chromosome partition. Involved in negative DNA supercoiling in vivo, and by this means organize and compact chromosomes. May achieve or facilitate chromosome segregation by condensation DNA from both sides of a centrally located replisome during cell division. This chain is Chromosome partition protein MukB, found in Erwinia tasmaniensis (strain DSM 17950 / CFBP 7177 / CIP 109463 / NCPPB 4357 / Et1/99).